A 620-amino-acid polypeptide reads, in one-letter code: MDSHTLIQALIYLGSAALIVPIAVRLGLGSVLGYLIAGCIIGPWGLRLVTDAESILHFAEIGVVLMLFIIGLELDPQRLWKLRAAVFGCGALQMVICGGLLGLFCMLLGLRWQVAELIGMTLALSSTAIAMQAMNERNLMVTQMGRSAFAVLLFQDIAAIPLVAMIPLLATSSASTTMGAFALSALKVAGALVLVVLLGRYVTRPALRFVARSGLREVFSAVALFLVFGFGLLLEEVGLSMAMGAFLAGVLLASSEYRHALESDIEPFKGLLLGLFFIGVGMSIDFGTLLENPLRIVILLLGFLIIKIAMLWLIARPLQVPNKQRRWFAVLLGQGSEFAFVVFGAAQMANVLEPEWAKSLTLAVALSMAATPILLVILNRLEQSSTEEAREADEIDEEQPRVIIAGFGRFGQITGRLLLSSGVKMVVLDHDPDHIETLRKFGMKVFYGDATRMDLLESAGAAKAEVLINAIDDPQTNLQLTEMVKEHFPHLQIIARARDVDHYIRLRQAGVEKPERETFEGALKTGRLALESLGLGPYEARERADVFRRFNIQMVEEMAMVENDTKARAAVYKRTSAMLSEIITEDREHLSLIQRHGWQGTEEGKHTGNMADEPETKPSS.

12 helical membrane passes run 4-24, 26-46, 54-74, 90-110, 114-134, 149-169, 178-198, 218-238, 270-290, 294-314, 327-347, and 359-379; these read HTLI…PIAV, LGLG…PWGL, SILH…GLEL, GALQ…LLGL, VAEL…MQAM, FAVL…IPLL, MGAF…VVLL, VFSA…EEVG, GLLL…GTLL, LRIV…LWLI, WFAV…GAAQ, and SLTL…VILN. An RCK N-terminal domain is found at 399–518; the sequence is QPRVIIAGFG…AGVEKPERET (120 aa). Positions 597 to 620 are disordered; that stretch reads GWQGTEEGKHTGNMADEPETKPSS.

This sequence belongs to the monovalent cation:proton antiporter 2 (CPA2) transporter (TC 2.A.37) family. KefC subfamily. Homodimer. Interacts with the regulatory subunit KefF.

The protein localises to the cell inner membrane. Its function is as follows. Pore-forming subunit of a potassium efflux system that confers protection against electrophiles. Catalyzes K(+)/H(+) antiport. The sequence is that of Glutathione-regulated potassium-efflux system protein KefC from Escherichia coli (strain K12 / MC4100 / BW2952).